The primary structure comprises 279 residues: Putative F-box protein At1g50880 (279 aa).

Positions 19–69 (SSSMSSIPLDVTSKILAKLPAKSVLRARCVSKQWSSISTDPYFISNMFPKQ) constitute an F-box domain.

This is Putative F-box protein At1g50880 from Arabidopsis thaliana (Mouse-ear cress).